The chain runs to 54 residues: Large ribosomal subunit protein bL33B (54 aa).

The protein belongs to the bacterial ribosomal protein bL33 family.

This Streptomyces coelicolor (strain ATCC BAA-471 / A3(2) / M145) protein is Large ribosomal subunit protein bL33B (rpmG2).